Reading from the N-terminus, the 270-residue chain is uncharacterized protein (270 aa).

Positions Met-1–Gly-22 are cleaved as a signal peptide. Cys-23 carries the N-palmitoyl cysteine lipid modification. A lipid anchor (S-diacylglycerol cysteine) is attached at Cys-23.

Belongs to the staphylococcal tandem lipoprotein family.

Its subcellular location is the cell membrane. This is an uncharacterized protein from Staphylococcus aureus (strain NCTC 8325 / PS 47).